Here is a 426-residue protein sequence, read N- to C-terminus: Enolase (426 aa).

Gln-165 provides a ligand contact to (2R)-2-phosphoglycerate. Residue Glu-209 is the Proton donor of the active site. Mg(2+) contacts are provided by Asp-244, Glu-287, and Asp-313. Residues Lys-338, Arg-367, Ser-368, and Lys-389 each coordinate (2R)-2-phosphoglycerate. Residue Lys-338 is the Proton acceptor of the active site.

Belongs to the enolase family. Mg(2+) serves as cofactor.

The protein resides in the cytoplasm. It localises to the secreted. It is found in the cell surface. It catalyses the reaction (2R)-2-phosphoglycerate = phosphoenolpyruvate + H2O. The protein operates within carbohydrate degradation; glycolysis; pyruvate from D-glyceraldehyde 3-phosphate: step 4/5. Functionally, catalyzes the reversible conversion of 2-phosphoglycerate (2-PG) into phosphoenolpyruvate (PEP). It is essential for the degradation of carbohydrates via glycolysis. The chain is Enolase from Methanococcus maripaludis (strain C5 / ATCC BAA-1333).